We begin with the raw amino-acid sequence, 473 residues long: Kynurenine 3-monooxygenase (473 aa).

Belongs to the aromatic-ring hydroxylase family. KMO subfamily. The cofactor is FAD.

The protein resides in the mitochondrion outer membrane. It carries out the reaction L-kynurenine + NADPH + O2 + H(+) = 3-hydroxy-L-kynurenine + NADP(+) + H2O. It participates in cofactor biosynthesis; NAD(+) biosynthesis; quinolinate from L-kynurenine: step 1/3. In terms of biological role, catalyzes the hydroxylation of L-kynurenine (L-Kyn) to form 3-hydroxy-L-kynurenine (L-3OHKyn). Required for synthesis of quinolinic acid. In Debaryomyces hansenii (strain ATCC 36239 / CBS 767 / BCRC 21394 / JCM 1990 / NBRC 0083 / IGC 2968) (Yeast), this protein is Kynurenine 3-monooxygenase.